We begin with the raw amino-acid sequence, 176 residues long: Glyoxalase domain-containing protein RDO1 (176 aa).

Residues S53–Y172 enclose the VOC domain. E168 serves as the catalytic Proton donor/acceptor.

It belongs to the glyoxalase I family.

It participates in secondary metabolite biosynthesis. Its function is as follows. Glyoxalase domain-containing protein; part of the gene cluster that mediates the biosynthesis of itaconic acid and 2-hydroxyparaconate. Cis-aconitate is secreted by the mitochondrial tricarboxylate transporter MTT1. In the cytosol cis-aconitate is converted into trans-aconitate via isomerization by the aconitate-delta-isomerase ADI1. Decarboxylation of trans-aconitate by the trans-aconitate decarboxylase TAD1 then leads then to the production of itaconic acid. The cytochrome P450 monooxygenase CYP3 further converts itaconate to 2-hydroxyparaconate via oxidation of the double bond, leading to a transient epoxide, which can subsequently be lactonized to produce 2-hydroxyparaconate. Secretion of itaconate and possibly 2-hydroxyparaconate into the medium is mediated by the major facilitator ITP1. The glyoxalase domain-containing protein RDO1 is not involved in the biosynthesis of itaconate and 2-hydroxyparaconate, however, it might play a role in the further conversion of 2-hydroxyparaconate to itatartarate. The chain is Glyoxalase domain-containing protein RDO1 from Mycosarcoma maydis (Corn smut fungus).